A 114-amino-acid polypeptide reads, in one-letter code: Integration host factor subunit alpha (114 aa).

It belongs to the bacterial histone-like protein family. In terms of assembly, heterodimer of an alpha and a beta chain.

In terms of biological role, this protein is one of the two subunits of integration host factor, a specific DNA-binding protein that functions in genetic recombination as well as in transcriptional and translational control. This Afipia carboxidovorans (strain ATCC 49405 / DSM 1227 / KCTC 32145 / OM5) (Oligotropha carboxidovorans) protein is Integration host factor subunit alpha.